The primary structure comprises 503 residues: Protein ERGIC-53-like (503 aa).

Positions 1-25 are cleaved as a signal peptide; that stretch reads MLKTGGLSPSLCLLSLLLALHSAER. Residues 26–439 are Lumenal-facing; sequence SYPPPQRRFE…WLPGFSTCLR (414 aa). Positions 32–253 constitute an L-type lectin-like domain; that stretch reads RRFEYKLSFK…DVLSFLTFSL (222 aa). The cysteines at positions 177 and 216 are disulfide-linked. A helical transmembrane segment spans residues 440–460; that stretch reads TSIFLFFLLIQTVGFFCYMNF. Residues 461–503 lie on the Cytoplasmic side of the membrane; that stretch reads RQELDKRLQEYLFTESISLQPALPIPRTIGVLRRQPVSPSMQA.

Predominantly expressed in the sublingual salivary gland, in the mucous cells of the acini, but not in the serous cells, nor in the duct system (at protein level). Not detected in the submandilar, nor the parotid glands. Expressed in the mucous glands, but not detected in the serous glands (at protein level). Besides the salivary glands, expressed in the Brunner's glands in the duodenum, but no other mucous or serous glands (at protein level).

It localises to the endoplasmic reticulum-Golgi intermediate compartment membrane. The polypeptide is Protein ERGIC-53-like (Lman1l) (Rattus norvegicus (Rat)).